Reading from the N-terminus, the 436-residue chain is tRNA(Ile)-lysidine synthase (436 aa).

Residue 25–30 (SGGLDS) participates in ATP binding.

Belongs to the tRNA(Ile)-lysidine synthase family.

The protein localises to the cytoplasm. The catalysed reaction is cytidine(34) in tRNA(Ile2) + L-lysine + ATP = lysidine(34) in tRNA(Ile2) + AMP + diphosphate + H(+). Ligates lysine onto the cytidine present at position 34 of the AUA codon-specific tRNA(Ile) that contains the anticodon CAU, in an ATP-dependent manner. Cytidine is converted to lysidine, thus changing the amino acid specificity of the tRNA from methionine to isoleucine. The chain is tRNA(Ile)-lysidine synthase from Serratia proteamaculans (strain 568).